Reading from the N-terminus, the 222-residue chain is MDPDFWHERWRQKQTGFHQTQVNPLLETFWPRCVGPARPRVFVPLCGKSLDMVWLRNRGHSVLGNELSPIAVDEFFRENGLSAVTTPLGNGFVRAESGDISLLCGNYFDLTPDLIGKVGAIYDRAALVAMPPEMQGRYAEQVFRLLPETPPMLLITLEYDAEEMSGPPFPVPEEAVVRLFGPAYRIELLSARDALEGNPQLRAKGLSRLTEKAYWLRAQASA.

W10, L45, E66, and R124 together coordinate S-adenosyl-L-methionine.

Belongs to the class I-like SAM-binding methyltransferase superfamily. TPMT family.

The protein localises to the cytoplasm. It carries out the reaction S-adenosyl-L-methionine + a thiopurine = S-adenosyl-L-homocysteine + a thiopurine S-methylether.. In Methylococcus capsulatus (strain ATCC 33009 / NCIMB 11132 / Bath), this protein is Thiopurine S-methyltransferase.